Here is a 1188-residue protein sequence, read N- to C-terminus: Phospholipid-transporting ATPase IB (1188 aa).

Topologically, residues Met-1–Arg-94 are cytoplasmic. At Thr-45 the chain carries Phosphothreonine. A helical membrane pass occupies residues Ala-95–Thr-115. Residues Gly-116–Thr-119 are Extracellular-facing. A helical membrane pass occupies residues Thr-120–Phe-140. Residues Lys-141–Gln-316 lie on the Cytoplasmic side of the membrane. Residues Ile-317 to Tyr-337 traverse the membrane as a helical segment. Topologically, residues Trp-338–Leu-364 are extracellular. Residues Thr-365 to Val-385 traverse the membrane as a helical segment. The Cytoplasmic portion of the chain corresponds to Lys-386–Val-887. Asp-428 serves as the catalytic 4-aspartylphosphate intermediate. Positions 428, 429, 430, 528, 569, 592, 625, 705, 706, 707, 795, and 801 each coordinate ATP. Asp-428 serves as a coordination point for Mg(2+). Thr-430 contacts Mg(2+). Asp-821 is a Mg(2+) binding site. ATP-binding residues include Asn-824 and Asp-825. Asp-825 serves as a coordination point for Mg(2+). Residues Val-888–Phe-908 form a helical membrane-spanning segment. Over Glu-909–Arg-910 the chain is Extracellular. The helical transmembrane segment at Trp-911 to Phe-931 threads the bilayer. Topologically, residues Glu-932–Lys-959 are cytoplasmic. Residues Val-960–Met-980 traverse the membrane as a helical segment. Residues Lys-981–Tyr-997 lie on the Extracellular side of the membrane. Residues Leu-998–Leu-1018 form a helical membrane-spanning segment. The Cytoplasmic segment spans residues Glu-1019 to His-1028. A helical membrane pass occupies residues Leu-1029–Trp-1049. The Extracellular portion of the chain corresponds to Pro-1050 to Thr-1063. The chain crosses the membrane as a helical span at residues Met-1064–Ile-1084. Residues Glu-1085 to Lys-1188 are Cytoplasmic-facing. The interval Ser-1162–Lys-1188 is disordered. The span at Gln-1163 to Lys-1182 shows a compositional bias: basic and acidic residues.

This sequence belongs to the cation transport ATPase (P-type) (TC 3.A.3) family. Type IV subfamily. As to quaternary structure, component of a P4-ATPase flippase complex which consists of a catalytic alpha subunit and an accessory beta subunit. Interacts with TMEM30A to form a flippase complex. Mg(2+) is required as a cofactor. In terms of tissue distribution, strongly expressed in the brain, cerebellum, retina and testis.

It is found in the membrane. Its subcellular location is the golgi apparatus membrane. It localises to the endosome membrane. The protein resides in the cell membrane. The protein localises to the photoreceptor outer segment membrane. It is found in the photoreceptor inner segment membrane. It carries out the reaction ATP + H2O + phospholipidSide 1 = ADP + phosphate + phospholipidSide 2.. The enzyme catalyses a 1,2-diacyl-sn-glycero-3-phospho-L-serine(out) + ATP + H2O = a 1,2-diacyl-sn-glycero-3-phospho-L-serine(in) + ADP + phosphate + H(+). The catalysed reaction is a 1,2-diacyl-sn-glycero-3-phosphoethanolamine(in) + ATP + H2O = a 1,2-diacyl-sn-glycero-3-phosphoethanolamine(out) + ADP + phosphate + H(+). Functionally, catalytic component of a P4-ATPase flippase complex which catalyzes the hydrolysis of ATP coupled to the transport of aminophospholipids from the outer to the inner leaflet of various membranes and ensures the maintenance of asymmetric distribution of phospholipids. Able to translocate phosphatidylserine, but not phosphatidylcholine. Phospholipid translocation also seems to be implicated in vesicle formation and in uptake of lipid signaling molecules. Reconstituted to liposomes, the ATP8A2:TMEM30A flippase complex predominantly transports phosphatidylserine (PS) and to a lesser extent phosphatidylethanolamine (PE). Phospholipid translocation is not associated with a countertransport of an inorganic ion or other charged substrate from the cytoplasmic side toward the exoplasm in connection with the phosphorylation from ATP. ATP8A2:TMEM30A may be involved in regulation of neurite outgrowth. Proposed to function in the generation and maintenance of phospholipid asymmetry in photoreceptor disk membranes and neuronal axon membranes. May be involved in vesicle trafficking in neuronal cells. Required for normal visual and auditory function; involved in photoreceptor and inner ear spiral ganglion cell survival. This chain is Phospholipid-transporting ATPase IB, found in Homo sapiens (Human).